The chain runs to 262 residues: MIDQTAFIHPSSIVEDGAIIGAGVHIGPFCYIGSQVEIGAGTVLKSHVVVNGVTKIGRDNEIYQFTSIGEVNQDLKYAGEPTRVEIGDRNRIRESVTIHRGTSQGGGLTKVGSDNLLMINTHIAHDCVVGNRCILANNATLGGHVSVDDFAIIGGMTAVHQFCIIGAHVMVGGCSGVAQDVPPYVVAQGNHATPFGLNIEGLKRRGFEKETLHAIRNAYKLLYRSGKTLDEVKPEIEALAAEHPAVQAFTDFFARSTRGIIR.

It belongs to the transferase hexapeptide repeat family. LpxA subfamily. Homotrimer.

It localises to the cytoplasm. It carries out the reaction a (3R)-hydroxyacyl-[ACP] + UDP-N-acetyl-alpha-D-glucosamine = a UDP-3-O-[(3R)-3-hydroxyacyl]-N-acetyl-alpha-D-glucosamine + holo-[ACP]. It functions in the pathway glycolipid biosynthesis; lipid IV(A) biosynthesis; lipid IV(A) from (3R)-3-hydroxytetradecanoyl-[acyl-carrier-protein] and UDP-N-acetyl-alpha-D-glucosamine: step 1/6. Its function is as follows. Involved in the biosynthesis of lipid A, a phosphorylated glycolipid that anchors the lipopolysaccharide to the outer membrane of the cell. This Pectobacterium atrosepticum (strain SCRI 1043 / ATCC BAA-672) (Erwinia carotovora subsp. atroseptica) protein is Acyl-[acyl-carrier-protein]--UDP-N-acetylglucosamine O-acyltransferase.